The chain runs to 302 residues: Ribosomal RNA small subunit methyltransferase H (302 aa).

S-adenosyl-L-methionine contacts are provided by residues 32-34, Asp-51, Phe-78, Asp-97, and Gln-104; that span reads GGH.

This sequence belongs to the methyltransferase superfamily. RsmH family.

Its subcellular location is the cytoplasm. It carries out the reaction cytidine(1402) in 16S rRNA + S-adenosyl-L-methionine = N(4)-methylcytidine(1402) in 16S rRNA + S-adenosyl-L-homocysteine + H(+). In terms of biological role, specifically methylates the N4 position of cytidine in position 1402 (C1402) of 16S rRNA. The polypeptide is Ribosomal RNA small subunit methyltransferase H (Nitratiruptor sp. (strain SB155-2)).